The sequence spans 478 residues: Cytochrome c-552 (478 aa).

Residues 1 to 26 (MTRIKINARRIFSLLIPFFFFTSVHA) form the signal peptide. His94 is a binding site for heme c. Heme contacts are provided by Cys122, Cys125, and Lys126. Cys160, Cys163, His164, Cys209, Cys212, and His213 together coordinate heme c. Ca(2+)-binding residues include Glu215, Tyr216, Lys261, and Gln263. Tyr216 lines the substrate pocket. Position 264 (His264) interacts with substrate. Positions 275, 282, 285, 286, 301, 314, 317, 318, and 393 each coordinate heme c.

The protein belongs to the cytochrome c-552 family. Ca(2+) serves as cofactor. It depends on heme c as a cofactor.

Its subcellular location is the periplasm. The catalysed reaction is 6 Fe(III)-[cytochrome c] + NH4(+) + 2 H2O = 6 Fe(II)-[cytochrome c] + nitrite + 8 H(+). It participates in nitrogen metabolism; nitrate reduction (assimilation). Its function is as follows. Catalyzes the reduction of nitrite to ammonia, consuming six electrons in the process. The protein is Cytochrome c-552 of Shigella flexneri.